The sequence spans 378 residues: Biotin synthase (378 aa).

One can recognise a Radical SAM core domain in the interval 68–292 (NEVQISTLLS…IAVTRICCPS (225 aa)). Positions 83, 87, and 90 each coordinate [4Fe-4S] cluster. Residues cysteine 129, cysteine 160, cysteine 220, and arginine 296 each contribute to the [2Fe-2S] cluster site.

It belongs to the radical SAM superfamily. Biotin synthase family. As to quaternary structure, homodimer. [4Fe-4S] cluster is required as a cofactor. The cofactor is [2Fe-2S] cluster.

It carries out the reaction (4R,5S)-dethiobiotin + (sulfur carrier)-SH + 2 reduced [2Fe-2S]-[ferredoxin] + 2 S-adenosyl-L-methionine = (sulfur carrier)-H + biotin + 2 5'-deoxyadenosine + 2 L-methionine + 2 oxidized [2Fe-2S]-[ferredoxin]. Its pathway is cofactor biosynthesis; biotin biosynthesis; biotin from 7,8-diaminononanoate: step 2/2. Functionally, catalyzes the conversion of dethiobiotin (DTB) to biotin by the insertion of a sulfur atom into dethiobiotin via a radical-based mechanism. This chain is Biotin synthase, found in Psychrobacter arcticus (strain DSM 17307 / VKM B-2377 / 273-4).